We begin with the raw amino-acid sequence, 1409 residues long: L-2-aminoadipate reductase large subunit (1409 aa).

In terms of domain architecture, Carrier spans 858-937 (QALSETEQTL…GFASEIDRLL (80 aa)). The residue at position 896 (Ser896) is an O-(pantetheine 4'-phosphoryl)serine.

The protein belongs to the ATP-dependent AMP-binding enzyme family. In terms of assembly, heterodimer of an alpha and a beta subunit. The cofactor is pantetheine 4'-phosphate.

It carries out the reaction (S)-2-amino-6-oxohexanoate + NADP(+) + H2O = L-2-aminoadipate + NADPH + 2 H(+). The enzyme catalyses (S)-2-amino-6-oxohexanoate + NAD(+) + H2O = L-2-aminoadipate + NADH + 2 H(+). It catalyses the reaction (S)-2-amino-6-oxohexanoate + AMP + diphosphate + NADP(+) = L-2-aminoadipate + ATP + NADPH + H(+). The protein operates within amino-acid biosynthesis; L-lysine biosynthesis via AAA pathway; L-lysine from L-alpha-aminoadipate (fungal route): step 1/3. Catalyzes the activation of alpha-aminoadipate by ATP-dependent adenylation and the reduction of activated alpha-aminoadipate by NADPH. The activated alpha-aminoadipate is bound to the phosphopantheinyl group of the enzyme itself before it is reduced to (S)-2-amino-6-oxohexanoate. This Penicillium chrysogenum (Penicillium notatum) protein is L-2-aminoadipate reductase large subunit (lys2).